A 94-amino-acid polypeptide reads, in one-letter code: ESAT-6-like protein EsxI (94 aa).

It belongs to the WXG100 family. ESAT-6 subfamily.

The protein localises to the secreted. This is ESAT-6-like protein EsxI from Mycobacterium bovis (strain ATCC BAA-935 / AF2122/97).